Reading from the N-terminus, the 205-residue chain is Calcium-binding allergen Bet v 3 (205 aa).

The interval methionine 1–asparagine 26 is disordered. EF-hand domains are found at residues leucine 36–glutamate 71, threonine 72–serine 107, glutamine 130–serine 165, and serine 168–arginine 203. Positions 49, 51, 53, and 60 each coordinate Ca(2+). Ca(2+) is bound by residues aspartate 143, aspartate 145, aspartate 147, tyrosine 149, glutamate 154, aspartate 181, asparagine 183, aspartate 185, arginine 187, and glutamate 192.

In terms of biological role, could be involved in calcium metabolism in pollen. Binds 3 calcium ions. The chain is Calcium-binding allergen Bet v 3 (BETVIII) from Betula pendula (European white birch).